The primary structure comprises 295 residues: MNTVTGAMSALITPFRNGRLDTETYEKLIQRQIRHGMDALVPVGTTGESATLSHSEHKECIEIAVKVCQGTGIKVLAGAGSNSTLEAIDLAKFAEKMGADGILCVTPYYNKPSQEGLFQHYKAVAESVGIPLMLYNVPGRTGVNLETCTIQRLFNEVKNIYGIKEASGSMERIVELNTKIPDFAILSGEDAINYPVLANHGVGVISVIGNLLPDKISALVHKALQGELDESRRINNSLYKINKALFVESNPIPIKAAMYLAGLTPTLEYRLPLVSPSQENMRMIEETLKDYEVKA.

Residue Thr46 participates in pyruvate binding. Tyr135 (proton donor/acceptor) is an active-site residue. Lys164 (schiff-base intermediate with substrate) is an active-site residue. Ile205 is a binding site for pyruvate.

Belongs to the DapA family. As to quaternary structure, homotetramer; dimer of dimers.

It localises to the cytoplasm. It carries out the reaction L-aspartate 4-semialdehyde + pyruvate = (2S,4S)-4-hydroxy-2,3,4,5-tetrahydrodipicolinate + H2O + H(+). It functions in the pathway amino-acid biosynthesis; L-lysine biosynthesis via DAP pathway; (S)-tetrahydrodipicolinate from L-aspartate: step 3/4. In terms of biological role, catalyzes the condensation of (S)-aspartate-beta-semialdehyde [(S)-ASA] and pyruvate to 4-hydroxy-tetrahydrodipicolinate (HTPA). In Wolinella succinogenes (strain ATCC 29543 / DSM 1740 / CCUG 13145 / JCM 31913 / LMG 7466 / NCTC 11488 / FDC 602W) (Vibrio succinogenes), this protein is 4-hydroxy-tetrahydrodipicolinate synthase.